Here is a 172-residue protein sequence, read N- to C-terminus: Adenine phosphoribosyltransferase (172 aa).

This sequence belongs to the purine/pyrimidine phosphoribosyltransferase family. Homodimer.

The protein localises to the cytoplasm. The enzyme catalyses AMP + diphosphate = 5-phospho-alpha-D-ribose 1-diphosphate + adenine. The protein operates within purine metabolism; AMP biosynthesis via salvage pathway; AMP from adenine: step 1/1. In terms of biological role, catalyzes a salvage reaction resulting in the formation of AMP, that is energically less costly than de novo synthesis. This Prochlorococcus marinus (strain MIT 9215) protein is Adenine phosphoribosyltransferase.